Here is a 369-residue protein sequence, read N- to C-terminus: Peptide chain release factor subunit 1 (369 aa).

The protein belongs to the eukaryotic release factor 1 family. As to quaternary structure, heterodimer of two subunits, one of which binds GTP.

It localises to the cytoplasm. In terms of biological role, directs the termination of nascent peptide synthesis (translation) in response to the termination codons UAA, UAG and UGA. The polypeptide is Peptide chain release factor subunit 1 (prf1) (Saccharolobus solfataricus (strain ATCC 35092 / DSM 1617 / JCM 11322 / P2) (Sulfolobus solfataricus)).